Here is a 70-residue protein sequence, read N- to C-terminus: Putative membrane protein insertion efficiency factor (70 aa).

This sequence belongs to the UPF0161 family.

Its subcellular location is the cell inner membrane. Could be involved in insertion of integral membrane proteins into the membrane. The chain is Putative membrane protein insertion efficiency factor from Methylobacillus flagellatus (strain ATCC 51484 / DSM 6875 / VKM B-1610 / KT).